A 110-amino-acid polypeptide reads, in one-letter code: NAD(P)H-quinone oxidoreductase subunit M (110 aa).

This sequence belongs to the complex I NdhM subunit family. NDH-1 can be composed of about 15 different subunits; different subcomplexes with different compositions have been identified which probably have different functions.

Its subcellular location is the cellular thylakoid membrane. It catalyses the reaction a plastoquinone + NADH + (n+1) H(+)(in) = a plastoquinol + NAD(+) + n H(+)(out). The catalysed reaction is a plastoquinone + NADPH + (n+1) H(+)(in) = a plastoquinol + NADP(+) + n H(+)(out). Functionally, NDH-1 shuttles electrons from an unknown electron donor, via FMN and iron-sulfur (Fe-S) centers, to quinones in the respiratory and/or the photosynthetic chain. The immediate electron acceptor for the enzyme in this species is believed to be plastoquinone. Couples the redox reaction to proton translocation, and thus conserves the redox energy in a proton gradient. Cyanobacterial NDH-1 also plays a role in inorganic carbon-concentration. This Synechococcus elongatus (strain ATCC 33912 / PCC 7942 / FACHB-805) (Anacystis nidulans R2) protein is NAD(P)H-quinone oxidoreductase subunit M.